Consider the following 945-residue polypeptide: Isoleucine--tRNA ligase (945 aa).

Residues 1–10 (MSNKKADSKP) are compositionally biased toward basic and acidic residues. The interval 1–21 (MSNKKADSKPQAKYPVNLLDT) is disordered. The 'HIGH' region motif lies at 66–76 (PYANGDIHLGH). Residue Glu-581 participates in L-isoleucyl-5'-AMP binding. The 'KMSKS' region motif lies at 622 to 626 (KMSKS). Lys-625 provides a ligand contact to ATP. Cys-908, Cys-911, Cys-928, and Cys-931 together coordinate Zn(2+).

This sequence belongs to the class-I aminoacyl-tRNA synthetase family. IleS type 1 subfamily. As to quaternary structure, monomer. It depends on Zn(2+) as a cofactor.

The protein resides in the cytoplasm. It catalyses the reaction tRNA(Ile) + L-isoleucine + ATP = L-isoleucyl-tRNA(Ile) + AMP + diphosphate. Its function is as follows. Catalyzes the attachment of isoleucine to tRNA(Ile). As IleRS can inadvertently accommodate and process structurally similar amino acids such as valine, to avoid such errors it has two additional distinct tRNA(Ile)-dependent editing activities. One activity is designated as 'pretransfer' editing and involves the hydrolysis of activated Val-AMP. The other activity is designated 'posttransfer' editing and involves deacylation of mischarged Val-tRNA(Ile). The polypeptide is Isoleucine--tRNA ligase (Burkholderia multivorans (strain ATCC 17616 / 249)).